The sequence spans 325 residues: ADP-ribose glycohydrolase MACROD1 (325 aa).

The disordered stretch occupies residues 21 to 55 (LGAPRPWPGPSPGATRTRSSACGPPASLSAHHPRA). K96, K103, and K129 each carry N6-succinyllysine. K138 is covalently cross-linked (Glycyl lysine isopeptide (Lys-Gly) (interchain with G-Cter in SUMO2)). The Macro domain maps to 141-322 (EPKYKKDKQL…IYRERLPHYF (182 aa)). A substrate-binding site is contributed by 159–161 (GDI). Position 163 is an N6-acetyllysine (K163). Residues 172–174 (AAN), 179–184 (GGGGVD), 267–273 (ISTGVFG), and F306 each bind substrate.

This sequence belongs to the MacroD-type family. MacroD1/2-like subfamily. In terms of assembly, interacts with ESR1; Interacts in a manner that is estrogen independent but is enhanced by estrogen. Interacts (via macro domain) with AR.

The protein localises to the nucleus. It catalyses the reaction 3''-O-acetyl-ADP-D-ribose + H2O = ADP-D-ribose + acetate + H(+). The enzyme catalyses 2''-O-acetyl-ADP-D-ribose + H2O = ADP-D-ribose + acetate + H(+). The catalysed reaction is 4-O-(ADP-D-ribosyl)-L-aspartyl-[protein] + H2O = L-aspartyl-[protein] + ADP-D-ribose + H(+). It carries out the reaction 5-O-(ADP-D-ribosyl)-L-glutamyl-[protein] + H2O = L-glutamyl-[protein] + ADP-D-ribose + H(+). It catalyses the reaction alpha-NAD(+) + H2O = ADP-D-ribose + nicotinamide + H(+). With respect to regulation, subject to competitive inhibition by the product ADP-ribose. Functionally, removes ADP-ribose from aspartate and glutamate residues in proteins bearing a single ADP-ribose moiety. Inactive towards proteins bearing poly-ADP-ribose. Deacetylates O-acetyl-ADP ribose, a signaling molecule generated by the deacetylation of acetylated lysine residues in histones and other proteins. Plays a role in estrogen signaling. Binds to androgen receptor (AR) and amplifies the transactivation function of AR in response to androgen. May play an important role in carcinogenesis and/or progression of hormone-dependent cancers by feed-forward mechanism that activates ESR1 transactivation. Could be an ESR1 coactivator, providing a positive feedback regulatory loop for ESR1 signal transduction. Could be involved in invasive growth by down-regulating CDH1 in endometrial cancer cells. Enhances ESR1-mediated transcription activity. This is ADP-ribose glycohydrolase MACROD1 (MACROD1) from Bos taurus (Bovine).